The chain runs to 72 residues: Translation initiation factor IF-1 (72 aa).

An S1-like domain is found at 1 to 72; the sequence is MAKTDLLEVQ…ERGRIVFRHK (72 aa).

This sequence belongs to the IF-1 family. Component of the 30S ribosomal translation pre-initiation complex which assembles on the 30S ribosome in the order IF-2 and IF-3, IF-1 and N-formylmethionyl-tRNA(fMet); mRNA recruitment can occur at any time during PIC assembly.

Its subcellular location is the cytoplasm. In terms of biological role, one of the essential components for the initiation of protein synthesis. Stabilizes the binding of IF-2 and IF-3 on the 30S subunit to which N-formylmethionyl-tRNA(fMet) subsequently binds. Helps modulate mRNA selection, yielding the 30S pre-initiation complex (PIC). Upon addition of the 50S ribosomal subunit IF-1, IF-2 and IF-3 are released leaving the mature 70S translation initiation complex. This chain is Translation initiation factor IF-1, found in Spiroplasma kunkelii.